A 244-amino-acid polypeptide reads, in one-letter code: Pyridoxine 5'-phosphate synthase (244 aa).

Asparagine 9 lines the 3-amino-2-oxopropyl phosphate pocket. 11–12 (DH) contributes to the 1-deoxy-D-xylulose 5-phosphate binding site. Position 20 (arginine 20) interacts with 3-amino-2-oxopropyl phosphate. Residue histidine 45 is the Proton acceptor of the active site. 2 residues coordinate 1-deoxy-D-xylulose 5-phosphate: arginine 47 and histidine 52. Residue glutamate 72 is the Proton acceptor of the active site. Threonine 102 is a binding site for 1-deoxy-D-xylulose 5-phosphate. Histidine 193 acts as the Proton donor in catalysis. 3-amino-2-oxopropyl phosphate contacts are provided by residues glycine 194 and 215 to 216 (GH).

The protein belongs to the PNP synthase family. As to quaternary structure, homooctamer; tetramer of dimers.

The protein resides in the cytoplasm. The catalysed reaction is 3-amino-2-oxopropyl phosphate + 1-deoxy-D-xylulose 5-phosphate = pyridoxine 5'-phosphate + phosphate + 2 H2O + H(+). The protein operates within cofactor biosynthesis; pyridoxine 5'-phosphate biosynthesis; pyridoxine 5'-phosphate from D-erythrose 4-phosphate: step 5/5. In terms of biological role, catalyzes the complicated ring closure reaction between the two acyclic compounds 1-deoxy-D-xylulose-5-phosphate (DXP) and 3-amino-2-oxopropyl phosphate (1-amino-acetone-3-phosphate or AAP) to form pyridoxine 5'-phosphate (PNP) and inorganic phosphate. The polypeptide is Pyridoxine 5'-phosphate synthase (Blochmanniella pennsylvanica (strain BPEN)).